A 728-amino-acid polypeptide reads, in one-letter code: Polyphosphate kinase (728 aa).

Position 57 (N57) interacts with ATP. R408 and R438 together coordinate Mg(2+). The active-site Phosphohistidine intermediate is the H468. Residues Y501, R597, and H625 each contribute to the ATP site. Positions 694–728 (VQRRPASPEQSQSSQAIFTAQAIAETTEDPELRSV) are disordered. Residues 695 to 709 (QRRPASPEQSQSSQA) are compositionally biased toward low complexity.

The protein belongs to the polyphosphate kinase 1 (PPK1) family. It depends on Mg(2+) as a cofactor. Post-translationally, an intermediate of this reaction is the autophosphorylated ppk in which a phosphate is covalently linked to a histidine residue through a N-P bond.

The catalysed reaction is [phosphate](n) + ATP = [phosphate](n+1) + ADP. Its function is as follows. Catalyzes the reversible transfer of the terminal phosphate of ATP to form a long-chain polyphosphate (polyP). This Synechocystis sp. (strain ATCC 27184 / PCC 6803 / Kazusa) protein is Polyphosphate kinase.